A 487-amino-acid polypeptide reads, in one-letter code: Serine/threonine-protein kinase 4 (487 aa).

Methionine 1 carries the N-acetylmethionine modification. Threonine 3 is modified (phosphothreonine). The Protein kinase domain maps to 30-281; it reads FDVLEKLGEG…ATQLLQHPFV (252 aa). ATP-binding positions include 36–44 and lysine 59; that span reads LGEGSYGSV. Aspartate 149 serves as the catalytic Proton acceptor. A Phosphothreonine; by autocatalysis modification is found at threonine 183. The residue at position 265 (serine 265) is a Phosphoserine. Positions 290–310 form a coiled coil; sequence LRDLINEAMDVKLKRQESQQR. Basic and acidic residues predominate over residues 303 to 312; sequence KRQESQQREV. A disordered region spans residues 303 to 332; sequence KRQESQQREVDQDDEENSEEDEMDSGTMVR. Acidic residues predominate over residues 313-326; sequence DQDDEENSEEDEMD. Position 320 is a phosphoserine (serine 320). Threonine 340 and threonine 367 each carry phosphothreonine. Threonine 387 bears the Phosphothreonine; by PKB/AKT1 mark. Phosphoserine occurs at positions 410 and 414. Tyrosine 433 carries the post-translational modification Phosphotyrosine. Residues 433–480 form the SARAH domain; it reads YEFLKSWTVEDLQKRLLALDPMMEQEIEEIRQKYQSKRQPILDAIEAK.

Belongs to the protein kinase superfamily. STE Ser/Thr protein kinase family. STE20 subfamily. In terms of assembly, homodimer; mediated via the coiled-coil region. Interacts with NORE1, which inhibits autoactivation. Interacts with and stabilizes SAV1. Interacts with RASSF1. Interacts with FOXO3. Interacts with RASSF2 (via SARAH domain). Interacts with AR, PKB/AKT1, TNNI3 and SIRT1. Interacts with DLG5 (via PDZ domain 3). Interacts with MARK3 and SCRIB in the presence of DLG5. The cofactor is Mg(2+). In terms of processing, autophosphorylated on serine and threonine residues. Phosphorylation at Thr-387 by PKB/AKT1, leads to inhibition of its: kinase activity, nuclear translocation and autophosphorylation at Thr-183. It also diminishes its cleavage by caspases and its ability to phosphorylate FOXO3. Post-translationally, proteolytically cleaved by caspase-3 during apoptosis at Asp-326 and Asp-349 resulting in a 37 kDa or a 39 kDa subunit respectively. The 39 kDa subunit is further cleaved into the 37 kDa form. Proteolytic cleavage results in kinase activation and nuclear translocation of the truncated form (MST1/N). It is less likely that cleavage at Asp-349 is a prerequisite for activation as this site is not conserved in the murine ortholog.

The protein localises to the cytoplasm. It localises to the nucleus. The enzyme catalyses L-seryl-[protein] + ATP = O-phospho-L-seryl-[protein] + ADP + H(+). It catalyses the reaction L-threonyl-[protein] + ATP = O-phospho-L-threonyl-[protein] + ADP + H(+). Inhibited by the C-terminal non-catalytic region. Activated by caspase-cleavage. Full activation also requires homodimerization and autophosphorylation of Thr-183. Activated by RASSF1 which acts by preventing its dephosphorylation. In terms of biological role, stress-activated, pro-apoptotic kinase which, following caspase-cleavage, enters the nucleus and induces chromatin condensation followed by internucleosomal DNA fragmentation. Key component of the Hippo signaling pathway which plays a pivotal role in organ size control and tumor suppression by restricting proliferation and promoting apoptosis. The core of this pathway is composed of a kinase cascade wherein STK3/MST2 and STK4/MST1, in complex with its regulatory protein SAV1, phosphorylates and activates LATS1/2 in complex with its regulatory protein MOB1, which in turn phosphorylates and inactivates YAP1 oncoprotein and WWTR1/TAZ. Phosphorylation of YAP1 by LATS2 inhibits its translocation into the nucleus to regulate cellular genes important for cell proliferation, cell death, and cell migration. STK3/MST2 and STK4/MST1 are required to repress proliferation of mature hepatocytes, to prevent activation of facultative adult liver stem cells (oval cells), and to inhibit tumor formation. Phosphorylates 'Ser-14' of histone H2B (H2BS14ph) during apoptosis. Phosphorylates FOXO3 upon oxidative stress, which results in its nuclear translocation and cell death initiation. Phosphorylates MOBKL1A, MOBKL1B and RASSF2. Phosphorylates TNNI3 (cardiac Tn-I) and alters its binding affinity to TNNC1 (cardiac Tn-C) and TNNT2 (cardiac Tn-T). Phosphorylates FOXO1 on 'Ser-212' and regulates its activation and stimulates transcription of PMAIP1 in a FOXO1-dependent manner. Phosphorylates SIRT1 and inhibits SIRT1-mediated p53/TP53 deacetylation, thereby promoting p53/TP53 dependent transcription and apoptosis upon DNA damage. Acts as an inhibitor of PKB/AKT1. Phosphorylates AR on 'Ser-650' and suppresses its activity by intersecting with PKB/AKT1 signaling and antagonizing formation of AR-chromatin complexes. In Colobus guereza (Mantled guereza), this protein is Serine/threonine-protein kinase 4 (STK4).